Consider the following 236-residue polypeptide: Osmoprotectant import permease protein OsmY (236 aa).

Helical transmembrane passes span 9–29, 47–67, 95–115, 126–146, 180–200, and 207–227; these read VLGFTIVILLLLALFIWGIGL, LMLVFTSMFFALLVGIPSGIL, VLALAMVIIGIGDTPAIVALF, TYAGLCSVPASLIEAANGIGM, PLAFLIGASSYGELIFPGIYL, and ILGATATALFALILDTLLAWF. Residues 43–224 enclose the ABC transmembrane type-1 domain; it reads GQRHLMLVFT…LFALILDTLL (182 aa).

Belongs to the binding-protein-dependent transport system permease family. In terms of assembly, the complex is composed of two ATP-binding proteins (OsmV), two transmembrane proteins (OsmW and OsmY) and a solute-binding protein (OsmX).

It is found in the cell inner membrane. In terms of biological role, part of the OsmU ABC transporter complex, which is involved in the uptake of osmoprotectants such as choline-O-sulfate and glycine betaine. Probably responsible for the translocation of the substrate across the membrane. The chain is Osmoprotectant import permease protein OsmY (osmY) from Salmonella typhimurium (strain LT2 / SGSC1412 / ATCC 700720).